We begin with the raw amino-acid sequence, 204 residues long: Superoxide dismutase [Mn] (204 aa).

Residues histidine 29, histidine 84, aspartate 167, and histidine 171 each coordinate Mn(2+).

It belongs to the iron/manganese superoxide dismutase family. As to quaternary structure, homotetramer. Mn(2+) is required as a cofactor.

It catalyses the reaction 2 superoxide + 2 H(+) = H2O2 + O2. Destroys superoxide anion radicals which are normally produced within the cells and which are toxic to biological systems. This chain is Superoxide dismutase [Mn] (sodA), found in Thermus aquaticus.